The chain runs to 273 residues: Undecaprenyl-diphosphatase (273 aa).

A run of 8 helical transmembrane segments spans residues 7–27 (LWIA…PVSS), 45–65 (AETF…VMFW), 89–109 (LTLI…LLLH), 115–135 (LFNP…LIAA), 152–171 (TYRQ…WPGF), 189–209 (YAAS…ATGL), 221–241 (ADFP…LIAI), and 253–273 (FIPF…LFVL).

It belongs to the UppP family.

The protein localises to the cell inner membrane. It catalyses the reaction di-trans,octa-cis-undecaprenyl diphosphate + H2O = di-trans,octa-cis-undecaprenyl phosphate + phosphate + H(+). Catalyzes the dephosphorylation of undecaprenyl diphosphate (UPP). Confers resistance to bacitracin. This chain is Undecaprenyl-diphosphatase, found in Erwinia tasmaniensis (strain DSM 17950 / CFBP 7177 / CIP 109463 / NCPPB 4357 / Et1/99).